We begin with the raw amino-acid sequence, 399 residues long: Tryptophan synthase beta chain (399 aa).

An N6-(pyridoxal phosphate)lysine modification is found at lysine 92.

Belongs to the TrpB family. Tetramer of two alpha and two beta chains. The cofactor is pyridoxal 5'-phosphate.

The catalysed reaction is (1S,2R)-1-C-(indol-3-yl)glycerol 3-phosphate + L-serine = D-glyceraldehyde 3-phosphate + L-tryptophan + H2O. It functions in the pathway amino-acid biosynthesis; L-tryptophan biosynthesis; L-tryptophan from chorismate: step 5/5. In terms of biological role, the beta subunit is responsible for the synthesis of L-tryptophan from indole and L-serine. The protein is Tryptophan synthase beta chain of Exiguobacterium sibiricum (strain DSM 17290 / CCUG 55495 / CIP 109462 / JCM 13490 / 255-15).